A 455-amino-acid chain; its full sequence is GTPase Der (455 aa).

2 consecutive EngA-type G domains span residues 4-169 (PIVA…PKDQ) and 178-355 (LRVS…GQHQ). GTP-binding positions include 10 to 17 (GRPNVGKS), 57 to 61 (DTGGL), 120 to 123 (NKLE), 184 to 191 (GRPNVGKS), 233 to 237 (DTAGI), and 298 to 301 (NKWD). Residues 356 to 441 (RRVSTSVLNE…PVRFIFRGKP (86 aa)) form the KH-like domain.

It belongs to the TRAFAC class TrmE-Era-EngA-EngB-Septin-like GTPase superfamily. EngA (Der) GTPase family. As to quaternary structure, associates with the 50S ribosomal subunit.

Its function is as follows. GTPase that plays an essential role in the late steps of ribosome biogenesis. The protein is GTPase Der of Gloeobacter violaceus (strain ATCC 29082 / PCC 7421).